A 581-amino-acid polypeptide reads, in one-letter code: Pyridine nucleotide-disulfide oxidoreductase domain-containing protein 2 (581 aa).

38–71 (VVIGAGHNGLVAAAYLQRLGVNTAVFERRHVIGG) is an FAD binding site.

Belongs to the carotenoid/retinoid oxidoreductase family. As to quaternary structure, interacts with COX5B; this interaction may contribute to localize PYROXD2 to the inner face of the inner mitochondrial membrane.

It localises to the mitochondrion matrix. Probable oxidoreductase that may play a role as regulator of mitochondrial function. The polypeptide is Pyridine nucleotide-disulfide oxidoreductase domain-containing protein 2 (Rattus norvegicus (Rat)).